The following is a 395-amino-acid chain: Chorismate synthase (395 aa).

Positions 40 and 46 each coordinate NADP(+). Residues 135 to 137 (RAS) and 256 to 257 (QA) each bind FMN. The span at 272 to 283 (RRGSQAHDEMRP) shows a compositional bias: basic and acidic residues. Residues 272-296 (RRGSQAHDEMRPGPDGILRSTNRAG) are disordered. FMN is bound by residues glycine 300, 315–319 (KPIST), and arginine 341.

It belongs to the chorismate synthase family. As to quaternary structure, homotetramer. FMNH2 serves as cofactor.

The catalysed reaction is 5-O-(1-carboxyvinyl)-3-phosphoshikimate = chorismate + phosphate. It participates in metabolic intermediate biosynthesis; chorismate biosynthesis; chorismate from D-erythrose 4-phosphate and phosphoenolpyruvate: step 7/7. Its function is as follows. Catalyzes the anti-1,4-elimination of the C-3 phosphate and the C-6 proR hydrogen from 5-enolpyruvylshikimate-3-phosphate (EPSP) to yield chorismate, which is the branch point compound that serves as the starting substrate for the three terminal pathways of aromatic amino acid biosynthesis. This reaction introduces a second double bond into the aromatic ring system. This Rhodococcus jostii (strain RHA1) protein is Chorismate synthase.